The following is a 1277-amino-acid chain: Protein FAM83H (1277 aa).

Positions 1–12 (MARRSQSSSQGE) are enriched in polar residues. Disordered regions lie at residues 1–20 (MARR…PNYL), 67–98 (SLQR…SGTY), 717–756 (FGST…TNPL), 772–805 (SKLE…TGRT), 971–1018 (EQTS…NSAF), 1070–1130 (KAEE…SRLS), 1158–1225 (QKNR…RDIL), and 1247–1266 (KKDE…AGKI). The span at 724-750 (SVEKAKENPPAEKEKEEGLLSRHDSFR) shows a compositional bias: basic and acidic residues. 4 stretches are compositionally biased toward polar residues: residues 777–805 (HTST…TGRT), 971–982 (EQTSSTIQTIGN), 993–1015 (SGPT…TRPN), and 1112–1130 (KSLS…SRLS). Residues 1204–1215 (SFLSRSRFSRPS) are compositionally biased toward low complexity. A compositionally biased stretch (basic and acidic residues) spans 1247–1263 (KKDEQPSHADDNDDKKA).

It belongs to the FAM83 family.

Its subcellular location is the cytoplasm. It is found in the cytoskeleton. Functionally, may play a role in keratin cytoskeleton disassembly. The chain is Protein FAM83H from Xenopus tropicalis (Western clawed frog).